A 105-amino-acid polypeptide reads, in one-letter code: Chloroacetanilide N-alkylformylase 2, ferredoxin component (105 aa).

Positions 2 to 105 (PKLVVVTREG…GLTVTIAPED (104 aa)) constitute a 2Fe-2S ferredoxin-type domain. Residues C40, C46, C49, and C86 each coordinate [2Fe-2S] cluster.

It belongs to the adrenodoxin/putidaredoxin family. The chloroacetanilide N-alkylformylase multicomponent enzyme system is composed of an oxygenase component (CndA) and an electron transfer component formed by a ferredoxin reductase (CndC1) and a ferredoxin (CndB1). In vitro, chloroacetanilide N-alkylformylase assays in which CndB1 is substituted for CndB2 demonstrate that the two enzymes possess nearly identical activities. It depends on [2Fe-2S] cluster as a cofactor.

Functionally, component of the chloroacetanilide N-alkylformylase multicomponent enzyme system involved in the degradation of chloroacetanilide herbicides (N-alkoxyalkyl-N-chloroacetyl-substituted aniline derivatives). In vitro, functions as an intermediate electron transfer protein. This is Chloroacetanilide N-alkylformylase 2, ferredoxin component from Rhizorhabdus wittichii (strain DC-6 / KACC 16600) (Sphingomonas wittichii).